Reading from the N-terminus, the 1092-residue chain is Isoleucine--tRNA ligase (1092 aa).

Positions 53-63 (PFANGLPHYGH) match the 'HIGH' region motif. The 'KMSKS' region signature appears at 613 to 617 (KLSKR). Lys-616 lines the ATP pocket.

Belongs to the class-I aminoacyl-tRNA synthetase family. IleS type 2 subfamily. Monomer. Requires Zn(2+) as cofactor.

The protein localises to the cytoplasm. The enzyme catalyses tRNA(Ile) + L-isoleucine + ATP = L-isoleucyl-tRNA(Ile) + AMP + diphosphate. Functionally, catalyzes the attachment of isoleucine to tRNA(Ile). As IleRS can inadvertently accommodate and process structurally similar amino acids such as valine, to avoid such errors it has two additional distinct tRNA(Ile)-dependent editing activities. One activity is designated as 'pretransfer' editing and involves the hydrolysis of activated Val-AMP. The other activity is designated 'posttransfer' editing and involves deacylation of mischarged Val-tRNA(Ile). This is Isoleucine--tRNA ligase from Rickettsia conorii (strain ATCC VR-613 / Malish 7).